Reading from the N-terminus, the 129-residue chain is Ergosterol biosynthetic protein 28 (129 aa).

A run of 4 helical transmembrane segments spans residues 4-24, 46-66, 71-91, and 96-116; these read LGYW…FGFF, TFGV…FNLE, YLAT…EYLF, and TIAN…WMLL.

It belongs to the ERG28 family.

The protein resides in the endoplasmic reticulum membrane. The sequence is that of Ergosterol biosynthetic protein 28 from Arabidopsis thaliana (Mouse-ear cress).